Consider the following 125-residue polypeptide: Small ribosomal subunit protein uS13 (125 aa).

A disordered region spans residues 90-125 (TRHRRGLPVRGQRTHTNARTKKGPRRAIAGKKKVTK).

The protein belongs to the universal ribosomal protein uS13 family. In terms of assembly, part of the 30S ribosomal subunit. Forms a loose heterodimer with protein S19. Forms two bridges to the 50S subunit in the 70S ribosome.

In terms of biological role, located at the top of the head of the 30S subunit, it contacts several helices of the 16S rRNA. In the 70S ribosome it contacts the 23S rRNA (bridge B1a) and protein L5 of the 50S subunit (bridge B1b), connecting the 2 subunits; these bridges are implicated in subunit movement. Contacts the tRNAs in the A and P-sites. The chain is Small ribosomal subunit protein uS13 from Gemmatimonas aurantiaca (strain DSM 14586 / JCM 11422 / NBRC 100505 / T-27).